We begin with the raw amino-acid sequence, 428 residues long: Trigger factor (428 aa).

Residues 163-248 form the PPIase FKBP-type domain; it reads KDIVTIDFEG…VKEIKAKELP (86 aa).

This sequence belongs to the FKBP-type PPIase family. Tig subfamily.

It localises to the cytoplasm. It carries out the reaction [protein]-peptidylproline (omega=180) = [protein]-peptidylproline (omega=0). Functionally, involved in protein export. Acts as a chaperone by maintaining the newly synthesized protein in an open conformation. Functions as a peptidyl-prolyl cis-trans isomerase. The protein is Trigger factor of Lachnoclostridium phytofermentans (strain ATCC 700394 / DSM 18823 / ISDg) (Clostridium phytofermentans).